A 1250-amino-acid polypeptide reads, in one-letter code: Nucleoporin pom152 (1250 aa).

The segment at 1–79 (MVTRVASSER…IYLRLLPKFR (79 aa)) is pore side. Residues 80–100 (IPWLSFQPAATLLQIAIFAAI) form a helical membrane-spanning segment. The cisternal side stretch occupies residues 101 to 1250 (NLLLSSLSSL…PQDSTSSSNI (1150 aa)).

In terms of assembly, component of the nuclear pore complex (NPC). NPC constitutes the exclusive means of nucleocytoplasmic transport. NPCs allow the passive diffusion of ions and small molecules and the active, nuclear transport receptor-mediated bidirectional transport of macromolecules such as proteins, RNAs, ribonucleoparticles (RNPs), and ribosomal subunits across the nuclear envelope.

Its subcellular location is the nucleus. The protein localises to the nuclear pore complex. It localises to the nucleus membrane. Functionally, functions as a component of the nuclear pore complex (NPC). NPC components, collectively referred to as nucleoporins (NUPs), can play the role of both NPC structural components and of docking or interaction partners for transiently associated nuclear transport factors. The protein is Nucleoporin pom152 (pom152) of Schizosaccharomyces pombe (strain 972 / ATCC 24843) (Fission yeast).